Here is a 316-residue protein sequence, read N- to C-terminus: SWR complex protein 2 (316 aa).

Disordered stretches follow at residues 1 to 81 (MSAT…GEEV), 93 to 127 (KRKI…KKKY), and 153 to 180 (ETRL…TMTQ). Basic and acidic residues predominate over residues 20–31 (KMRELLEKEHLR). Residues 20-95 (KMRELLEKEH…RDEERIKKRK (76 aa)) are a coiled coil. Residues 40–56 (EKEDEEYNIEEEEEAER) show a composition bias toward acidic residues. 2 positions are modified to phosphoserine: serine 64 and serine 65. A compositionally biased stretch (basic and acidic residues) spans 70 to 81 (ELKKLEEEGEEV). Residues 167–180 (VSASANRQKGTMTQ) show a composition bias toward polar residues.

The protein belongs to the VPS72/YL1 family. Component of the SWR1 chromatin-remodeling complex.

The protein resides in the nucleus. Its function is as follows. Participates in the catalytic exchange of histone H2A for the H2A variant pht1, an euchromatin-specific factor, leading to chromatin remodeling and changes in transcription of targeted genes. The sequence is that of SWR complex protein 2 (swc2) from Schizosaccharomyces pombe (strain 972 / ATCC 24843) (Fission yeast).